We begin with the raw amino-acid sequence, 361 residues long: Probable dual-specificity RNA methyltransferase RlmN (361 aa).

Glu-91 serves as the catalytic Proton acceptor. The Radical SAM core domain maps to 97–329 (QHYGLSVCVT…KKKGGNCVVR (233 aa)). Cys-104 and Cys-340 form a disulfide bridge. The [4Fe-4S] cluster site is built by Cys-111, Cys-115, and Cys-118. S-adenosyl-L-methionine is bound by residues 163–164 (GE), Ser-195, 218–220 (SLH), and Asn-296. Catalysis depends on Cys-340, which acts as the S-methylcysteine intermediate.

The protein belongs to the radical SAM superfamily. RlmN family. It depends on [4Fe-4S] cluster as a cofactor.

The protein localises to the cytoplasm. It catalyses the reaction adenosine(2503) in 23S rRNA + 2 reduced [2Fe-2S]-[ferredoxin] + 2 S-adenosyl-L-methionine = 2-methyladenosine(2503) in 23S rRNA + 5'-deoxyadenosine + L-methionine + 2 oxidized [2Fe-2S]-[ferredoxin] + S-adenosyl-L-homocysteine. It carries out the reaction adenosine(37) in tRNA + 2 reduced [2Fe-2S]-[ferredoxin] + 2 S-adenosyl-L-methionine = 2-methyladenosine(37) in tRNA + 5'-deoxyadenosine + L-methionine + 2 oxidized [2Fe-2S]-[ferredoxin] + S-adenosyl-L-homocysteine. In terms of biological role, specifically methylates position 2 of adenine 2503 in 23S rRNA and position 2 of adenine 37 in tRNAs. The sequence is that of Probable dual-specificity RNA methyltransferase RlmN from Streptococcus pneumoniae (strain Hungary19A-6).